We begin with the raw amino-acid sequence, 162 residues long: ATP synthase subunit b (162 aa).

A helical membrane pass occupies residues 2–22; it reads LEFNATLLAQIVDFIILLIFL.

This sequence belongs to the ATPase B chain family. As to quaternary structure, F-type ATPases have 2 components, F(1) - the catalytic core - and F(0) - the membrane proton channel. F(1) has five subunits: alpha(3), beta(3), gamma(1), delta(1), epsilon(1). F(0) has three main subunits: a(1), b(2) and c(10-14). The alpha and beta chains form an alternating ring which encloses part of the gamma chain. F(1) is attached to F(0) by a central stalk formed by the gamma and epsilon chains, while a peripheral stalk is formed by the delta and b chains.

It is found in the cell membrane. In terms of biological role, f(1)F(0) ATP synthase produces ATP from ADP in the presence of a proton or sodium gradient. F-type ATPases consist of two structural domains, F(1) containing the extramembraneous catalytic core and F(0) containing the membrane proton channel, linked together by a central stalk and a peripheral stalk. During catalysis, ATP synthesis in the catalytic domain of F(1) is coupled via a rotary mechanism of the central stalk subunits to proton translocation. Its function is as follows. Component of the F(0) channel, it forms part of the peripheral stalk, linking F(1) to F(0). This is ATP synthase subunit b from Pelotomaculum thermopropionicum (strain DSM 13744 / JCM 10971 / SI).